A 296-amino-acid chain; its full sequence is MQDRFIKCIAELPKPLSDALVPMLNAEFAGHIDAQQLSTLITKSGLAESELLIALLPVAAALARPPISEFYVGAIAKGKSGDIYMGANMELSGEALFHSVHAEQSAISHAWLSGERQIEDVIVNFSPCGHCRQFMNELVEGQKVKIHLPEQQTQPLSHYLPYAFGPSDLNITEPLLTKQQHELSLDSSDPMIIEALDHASLSYAPYTNSYAAVVLETQDGATYCGRYAENAAFNPSMLPMQMALSTMARHNREFCEISRAVLIESAGGKISLVGATMDALHAVAAVELEHIVLDPE.

CMP/dCMP-type deaminase domains are found at residues 47-167 (AESE…FGPS) and 186-296 (DSSD…LDPE). 88-90 (NME) provides a ligand contact to substrate. His-101 provides a ligand contact to Zn(2+). Glu-103 acts as the Proton donor in catalysis. Residues Cys-128 and Cys-131 each coordinate Zn(2+).

Belongs to the cytidine and deoxycytidylate deaminase family. Homodimer. Zn(2+) is required as a cofactor.

The enzyme catalyses cytidine + H2O + H(+) = uridine + NH4(+). It catalyses the reaction 2'-deoxycytidine + H2O + H(+) = 2'-deoxyuridine + NH4(+). Functionally, this enzyme scavenges exogenous and endogenous cytidine and 2'-deoxycytidine for UMP synthesis. The protein is Cytidine deaminase of Shewanella sediminis (strain HAW-EB3).